A 316-amino-acid chain; its full sequence is tRNA dimethylallyltransferase (316 aa).

An ATP-binding site is contributed by 17 to 24; it reads GPTASGKT. Substrate is bound at residue 19–24; it reads TASGKT. 3 interaction with substrate tRNA regions span residues 42-45, 166-170, and 247-252; these read DSAL, QRLSR, and RCVGYR.

It belongs to the IPP transferase family. As to quaternary structure, monomer. It depends on Mg(2+) as a cofactor.

The enzyme catalyses adenosine(37) in tRNA + dimethylallyl diphosphate = N(6)-dimethylallyladenosine(37) in tRNA + diphosphate. Its function is as follows. Catalyzes the transfer of a dimethylallyl group onto the adenine at position 37 in tRNAs that read codons beginning with uridine, leading to the formation of N6-(dimethylallyl)adenosine (i(6)A). The chain is tRNA dimethylallyltransferase from Citrobacter koseri (strain ATCC BAA-895 / CDC 4225-83 / SGSC4696).